Here is a 410-residue protein sequence, read N- to C-terminus: Tryptophan synthase beta chain (410 aa).

An N6-(pyridoxal phosphate)lysine modification is found at K99.

The protein belongs to the TrpB family. As to quaternary structure, tetramer of two alpha and two beta chains. It depends on pyridoxal 5'-phosphate as a cofactor.

The catalysed reaction is (1S,2R)-1-C-(indol-3-yl)glycerol 3-phosphate + L-serine = D-glyceraldehyde 3-phosphate + L-tryptophan + H2O. The protein operates within amino-acid biosynthesis; L-tryptophan biosynthesis; L-tryptophan from chorismate: step 5/5. Functionally, the beta subunit is responsible for the synthesis of L-tryptophan from indole and L-serine. This is Tryptophan synthase beta chain from Pseudomonas fluorescens (strain Pf0-1).